Reading from the N-terminus, the 367-residue chain is Isocitrate dehydrogenase [NAD] regulatory subunit 1, mitochondrial (367 aa).

A mitochondrion-targeting transit peptide spans 1-25; that stretch reads MSRRSLTLLKNLARNANGSGIQTRS.

Belongs to the isocitrate and isopropylmalate dehydrogenases family. Heterooligomer of catalytic and regulatory subunits. Ubiquitous. Predominantly expressed in roots, stems and leaves.

The protein resides in the mitochondrion. In terms of biological role, performs an essential role in the oxidative function of the citric acid cycle. In Arabidopsis thaliana (Mouse-ear cress), this protein is Isocitrate dehydrogenase [NAD] regulatory subunit 1, mitochondrial (IDH1).